The sequence spans 668 residues: DNA ligase (668 aa).

Residues 31–35, 80–81, and Glu112 contribute to the NAD(+) site; these read DAEYD and SL. Catalysis depends on Lys114, which acts as the N6-AMP-lysine intermediate. 4 residues coordinate NAD(+): Arg135, Glu172, Lys289, and Lys313. Zn(2+)-binding residues include Cys407, Cys410, Cys425, and Cys431. In terms of domain architecture, BRCT spans 591 to 668; the sequence is SVPQPLAGKV…NEEQLIELLN (78 aa).

The protein belongs to the NAD-dependent DNA ligase family. LigA subfamily. Requires Mg(2+) as cofactor. Mn(2+) serves as cofactor.

It carries out the reaction NAD(+) + (deoxyribonucleotide)n-3'-hydroxyl + 5'-phospho-(deoxyribonucleotide)m = (deoxyribonucleotide)n+m + AMP + beta-nicotinamide D-nucleotide.. In terms of biological role, DNA ligase that catalyzes the formation of phosphodiester linkages between 5'-phosphoryl and 3'-hydroxyl groups in double-stranded DNA using NAD as a coenzyme and as the energy source for the reaction. It is essential for DNA replication and repair of damaged DNA. The chain is DNA ligase from Aliivibrio fischeri (strain MJ11) (Vibrio fischeri).